Reading from the N-terminus, the 276-residue chain is Large ribosomal subunit protein uL2 (276 aa).

Positions 222-276 (GVAMNPIDHPLGGGEGRSSGGRHPVSPWGMPTKGYKTRDRKKASSKLIIKRRGQK) are disordered. The span at 259 to 276 (RDRKKASSKLIIKRRGQK) shows a compositional bias: basic residues.

The protein belongs to the universal ribosomal protein uL2 family. In terms of assembly, part of the 50S ribosomal subunit. Forms a bridge to the 30S subunit in the 70S ribosome.

In terms of biological role, one of the primary rRNA binding proteins. Required for association of the 30S and 50S subunits to form the 70S ribosome, for tRNA binding and peptide bond formation. It has been suggested to have peptidyltransferase activity; this is somewhat controversial. Makes several contacts with the 16S rRNA in the 70S ribosome. The chain is Large ribosomal subunit protein uL2 from Nitratidesulfovibrio vulgaris (strain ATCC 29579 / DSM 644 / CCUG 34227 / NCIMB 8303 / VKM B-1760 / Hildenborough) (Desulfovibrio vulgaris).